The chain runs to 219 residues: 2-C-methyl-D-erythritol 4-phosphate cytidylyltransferase (219 aa).

The protein belongs to the IspD/TarI cytidylyltransferase family. IspD subfamily.

It carries out the reaction 2-C-methyl-D-erythritol 4-phosphate + CTP + H(+) = 4-CDP-2-C-methyl-D-erythritol + diphosphate. Its pathway is isoprenoid biosynthesis; isopentenyl diphosphate biosynthesis via DXP pathway; isopentenyl diphosphate from 1-deoxy-D-xylulose 5-phosphate: step 2/6. Its function is as follows. Catalyzes the formation of 4-diphosphocytidyl-2-C-methyl-D-erythritol from CTP and 2-C-methyl-D-erythritol 4-phosphate (MEP). The polypeptide is 2-C-methyl-D-erythritol 4-phosphate cytidylyltransferase (Bacteroides fragilis (strain ATCC 25285 / DSM 2151 / CCUG 4856 / JCM 11019 / LMG 10263 / NCTC 9343 / Onslow / VPI 2553 / EN-2)).